Here is a 186-residue protein sequence, read N- to C-terminus: ATP-dependent protease subunit HslV (186 aa).

Residue threonine 13 is part of the active site. Na(+) is bound by residues alanine 167, cysteine 170, and threonine 173.

It belongs to the peptidase T1B family. HslV subfamily. In terms of assembly, a double ring-shaped homohexamer of HslV is capped on each side by a ring-shaped HslU homohexamer. The assembly of the HslU/HslV complex is dependent on binding of ATP.

The protein resides in the cytoplasm. The catalysed reaction is ATP-dependent cleavage of peptide bonds with broad specificity.. Its activity is regulated as follows. Allosterically activated by HslU binding. In terms of biological role, protease subunit of a proteasome-like degradation complex believed to be a general protein degrading machinery. This chain is ATP-dependent protease subunit HslV, found in Allorhizobium ampelinum (strain ATCC BAA-846 / DSM 112012 / S4) (Agrobacterium vitis (strain S4)).